We begin with the raw amino-acid sequence, 332 residues long: 2,3-diketo-L-gulonate reductase (332 aa).

The active-site Proton donor is His-44. Residues 168-174 (ITMVDMS), 224-225 (WK), and 304-306 (GHE) each bind NAD(+).

Belongs to the LDH2/MDH2 oxidoreductase family. DlgD subfamily. In terms of assembly, homodimer.

The protein localises to the cytoplasm. It catalyses the reaction 3-dehydro-L-gulonate + NAD(+) = 2,3-dioxo-L-gulonate + NADH + H(+). The enzyme catalyses 3-dehydro-L-gulonate + NADP(+) = 2,3-dioxo-L-gulonate + NADPH + H(+). Its function is as follows. Catalyzes the reduction of 2,3-diketo-L-gulonate in the presence of NADH, to form 3-keto-L-gulonate. The chain is 2,3-diketo-L-gulonate reductase from Salmonella typhi.